The chain runs to 461 residues: tRNA modification GTPase MnmE (461 aa).

Residues Arg-27, Glu-89, and Arg-128 each contribute to the (6S)-5-formyl-5,6,7,8-tetrahydrofolate site. A TrmE-type G domain is found at 224-382; sequence GLATAIVGRP…LENAIEKLFF (159 aa). Residue Asn-234 coordinates K(+). Residues 234 to 239, 253 to 259, and 278 to 281 contribute to the GTP site; these read NVGKSS, TDIAGTT, and DTAG. Ser-238 provides a ligand contact to Mg(2+). K(+) contacts are provided by Thr-253, Ile-255, and Thr-258. Residue Thr-259 participates in Mg(2+) binding. Position 461 (Lys-461) interacts with (6S)-5-formyl-5,6,7,8-tetrahydrofolate.

The protein belongs to the TRAFAC class TrmE-Era-EngA-EngB-Septin-like GTPase superfamily. TrmE GTPase family. Homodimer. Heterotetramer of two MnmE and two MnmG subunits. Requires K(+) as cofactor.

It is found in the cytoplasm. Functionally, exhibits a very high intrinsic GTPase hydrolysis rate. Involved in the addition of a carboxymethylaminomethyl (cmnm) group at the wobble position (U34) of certain tRNAs, forming tRNA-cmnm(5)s(2)U34. The protein is tRNA modification GTPase MnmE of Lactobacillus gasseri (strain ATCC 33323 / DSM 20243 / BCRC 14619 / CIP 102991 / JCM 1131 / KCTC 3163 / NCIMB 11718 / NCTC 13722 / AM63).